We begin with the raw amino-acid sequence, 215 residues long: Cytochrome b6 (215 aa).

The helical transmembrane segment at 32-52 threads the bilayer; that stretch reads IFYCLGGITLTCFLVQVATGF. Cys-35 provides a ligand contact to heme c. Heme b is bound by residues His-86 and His-100. 3 consecutive transmembrane segments (helical) span residues 90–110, 116–136, and 186–206; these read ASMMVLMMILHVFRVYLTGGF, LTWVTGVVLAVLTASFGVTGY, and LHTFVLPLLTAVFMLMHFPMI. Heme b is bound by residues His-187 and His-202.

The protein belongs to the cytochrome b family. PetB subfamily. In terms of assembly, the 4 large subunits of the cytochrome b6-f complex are cytochrome b6, subunit IV (17 kDa polypeptide, PetD), cytochrome f and the Rieske protein, while the 4 small subunits are PetG, PetL, PetM and PetN. The complex functions as a dimer. Heme b is required as a cofactor. It depends on heme c as a cofactor.

It is found in the plastid. Its subcellular location is the chloroplast thylakoid membrane. Functionally, component of the cytochrome b6-f complex, which mediates electron transfer between photosystem II (PSII) and photosystem I (PSI), cyclic electron flow around PSI, and state transitions. The protein is Cytochrome b6 of Daucus carota (Wild carrot).